The chain runs to 430 residues: Adenylosuccinate synthetase (430 aa).

GTP-binding positions include 12 to 18 (GDEGKGK) and 40 to 42 (GHT). The Proton acceptor role is filled by Asp-13. Mg(2+)-binding residues include Asp-13 and Gly-40. IMP-binding positions include 13-16 (DEGK), 38-41 (NAGH), Thr-128, Arg-142, Gln-223, Thr-238, and Arg-302. The active-site Proton donor is His-41. Residue 298-304 (TTTGRPR) participates in substrate binding. GTP-binding positions include Arg-304, 330–332 (LLD), and 412–414 (SVG).

Belongs to the adenylosuccinate synthetase family. As to quaternary structure, homodimer. The cofactor is Mg(2+).

Its subcellular location is the cytoplasm. It carries out the reaction IMP + L-aspartate + GTP = N(6)-(1,2-dicarboxyethyl)-AMP + GDP + phosphate + 2 H(+). It functions in the pathway purine metabolism; AMP biosynthesis via de novo pathway; AMP from IMP: step 1/2. Its function is as follows. Plays an important role in the de novo pathway of purine nucleotide biosynthesis. Catalyzes the first committed step in the biosynthesis of AMP from IMP. This Listeria monocytogenes serovar 1/2a (strain ATCC BAA-679 / EGD-e) protein is Adenylosuccinate synthetase.